The sequence spans 601 residues: Nuclear envelope protein ndc1 (601 aa).

The Cytoplasmic segment spans residues 1–34; it reads MVMLRTSFPSGSRTKAVRYHTLLRPILQQRFLRA. Residues 35 to 55 form a helical membrane-spanning segment; that stretch reads CFALLCLCCITSYWFSSGPFI. The Perinuclear space segment spans residues 56–58; that stretch reads SLS. The chain crosses the membrane as a helical span at residues 59-79; that stretch reads FWFLSLVRGFVCFFFMFPYFV. Topologically, residues 80-106 are cytoplasmic; that stretch reads MLKSRMSTQKVTKQSLGAQLFYDFSPK. The chain crosses the membrane as a helical span at residues 107–127; sequence SFFLVYLTFAVSVSCLCLFYI. The Perinuclear space portion of the chain corresponds to 128-153; it reads KGHASSIRLQWIASPNAYELPSLNER. Residues 154 to 174 form a helical membrane-spanning segment; it reads FVYMTYFSHILILALTVEHLY. Residues 175-182 are Cytoplasmic-facing; it reads LQRDSPSR. The chain crosses the membrane as a helical span at residues 183 to 203; that stretch reads PVINVSFFNYIFQNLGWLIRF. At 204–256 the chain is on the perinuclear space side; the sequence is SFRKSIICCLFTPFSYAILRSYIWRFAALLTSCCRRIAYTKTPPKWPLSLRLL. The chain crosses the membrane as a helical span at residues 257–277; sequence LHSFWMAFIVCLTFQIALLIF. Over 278–601 the chain is Cytoplasmic; the sequence is RVFLYSGPMI…VLFREYKSNS (324 aa).

The protein belongs to the NDC1 family. Component of the nuclear pore complex (NPC). NPC constitutes the exclusive means of nucleocytoplasmic transport. NPCs allow the passive diffusion of ions and small molecules and the active, nuclear transport receptor-mediated bidirectional transport of macromolecules such as proteins, RNAs, ribonucleoparticles (RNPs), and ribosomal subunits across the nuclear envelope. Due to its 8-fold rotational symmetry, all subunits are present with 8 copies or multiples thereof.

The protein resides in the nucleus. It localises to the nuclear pore complex. It is found in the nucleus membrane. The protein localises to the cytoplasm. Its subcellular location is the cytoskeleton. The protein resides in the microtubule organizing center. It localises to the spindle pole body. Functionally, component of the nuclear pore complex (NPC) and the spindle pole body (SPB), which plays a key role in de novo assembly and insertion of both structures in the nuclear envelope. Involved in the formation of the bipolar mitotic spindle. Anchors the spindle pole body in the nuclear envelope. This is Nuclear envelope protein ndc1 (cut11) from Schizosaccharomyces pombe (strain 972 / ATCC 24843) (Fission yeast).